Consider the following 506-residue polypeptide: Histidine ammonia-lyase (506 aa).

Residues 143–145 constitute a cross-link (5-imidazolinone (Ala-Gly)); it reads ASG. Ser-144 bears the 2,3-didehydroalanine (Ser) mark.

Belongs to the PAL/histidase family. Post-translationally, contains an active site 4-methylidene-imidazol-5-one (MIO), which is formed autocatalytically by cyclization and dehydration of residues Ala-Ser-Gly.

Its subcellular location is the cytoplasm. It catalyses the reaction L-histidine = trans-urocanate + NH4(+). The protein operates within amino-acid degradation; L-histidine degradation into L-glutamate; N-formimidoyl-L-glutamate from L-histidine: step 1/3. The protein is Histidine ammonia-lyase of Salmonella typhi.